Here is a 473-residue protein sequence, read N- to C-terminus: ATP synthase subunit beta (473 aa).

158–165 contributes to the ATP binding site; sequence GGAGVGKT.

This sequence belongs to the ATPase alpha/beta chains family. As to quaternary structure, F-type ATPases have 2 components, CF(1) - the catalytic core - and CF(0) - the membrane proton channel. CF(1) has five subunits: alpha(3), beta(3), gamma(1), delta(1), epsilon(1). CF(0) has three main subunits: a(1), b(2) and c(9-12). The alpha and beta chains form an alternating ring which encloses part of the gamma chain. CF(1) is attached to CF(0) by a central stalk formed by the gamma and epsilon chains, while a peripheral stalk is formed by the delta and b chains.

The protein resides in the cell membrane. It catalyses the reaction ATP + H2O + 4 H(+)(in) = ADP + phosphate + 5 H(+)(out). In terms of biological role, produces ATP from ADP in the presence of a proton gradient across the membrane. The catalytic sites are hosted primarily by the beta subunits. The protein is ATP synthase subunit beta of Geobacillus stearothermophilus (Bacillus stearothermophilus).